The sequence spans 436 residues: Glutamyl-tRNA reductase (436 aa).

Residues Thr49 to Arg52, Ser109, Glu114 to Gln116, and Gln120 contribute to the substrate site. Residue Cys50 is the Nucleophile of the active site. An NADP(+)-binding site is contributed by Gly189–Cys194.

Belongs to the glutamyl-tRNA reductase family. As to quaternary structure, homodimer.

It catalyses the reaction (S)-4-amino-5-oxopentanoate + tRNA(Glu) + NADP(+) = L-glutamyl-tRNA(Glu) + NADPH + H(+). It functions in the pathway porphyrin-containing compound metabolism; protoporphyrin-IX biosynthesis; 5-aminolevulinate from L-glutamyl-tRNA(Glu): step 1/2. Its function is as follows. Catalyzes the NADPH-dependent reduction of glutamyl-tRNA(Glu) to glutamate 1-semialdehyde (GSA). The protein is Glutamyl-tRNA reductase of Pelobacter propionicus (strain DSM 2379 / NBRC 103807 / OttBd1).